A 253-amino-acid chain; its full sequence is Major prion protein (253 aa).

The N-terminal stretch at 1–22 (MANLGCWMLVLFVATWSNLGLC) is a signal peptide. The interval 23 to 38 (KKRPKPGGWNTGGSRY) is interaction with ADGRG6. Positions 23–230 (KKRPKPGGWN…ESQAYYQRGS (208 aa)) are interaction with GRB2, ERI3 and SYN1. The disordered stretch occupies residues 25–108 (RPKPGGWNTG…WNKPSKPKTN (84 aa)). 5 tandem repeats follow at residues 51-59 (PQGGGGWGQ), 60-67 (PHGGGWGQ), 68-75 (PHGGGWGQ), 76-83 (PHGGGWGQ), and 84-91 (PHGGGWGQ). Residues 51 to 91 (PQGGGGWGQPHGGGWGQPHGGGWGQPHGGGWGQPHGGGWGQ) form a 5 X 8 AA tandem repeats of P-H-G-G-G-W-G-Q region. The segment covering 52 to 95 (QGGGGWGQPHGGGWGQPHGGGWGQPHGGGWGQPHGGGWGQGGGT) has biased composition (gly residues). 12 residues coordinate Cu(2+): histidine 61, glycine 62, glycine 63, histidine 69, glycine 70, glycine 71, histidine 77, glycine 78, glycine 79, histidine 85, glycine 86, and glycine 87. Cysteines 179 and 214 form a disulfide. 2 N-linked (GlcNAc...) asparagine glycosylation sites follow: asparagine 181 and asparagine 197. Residue serine 230 is the site of GPI-anchor amidated serine attachment. Residues 231-253 (SMVLFSSPPVILLISFLIFLIVG) constitute a propeptide, removed in mature form.

The protein belongs to the prion family. As to quaternary structure, monomer and homodimer. Has a tendency to aggregate into amyloid fibrils containing a cross-beta spine, formed by a steric zipper of superposed beta-strands. Soluble oligomers may represent an intermediate stage on the path to fibril formation. Copper binding may promote oligomerization. Interacts with GRB2, APP, ERI3/PRNPIP and SYN1. Mislocalized cytosolically exposed PrP interacts with MGRN1; this interaction alters MGRN1 subcellular location and causes lysosomal enlargement. Interacts with APP. Interacts with KIAA1191. Interacts with ADGRG6.

The protein resides in the cell membrane. It is found in the golgi apparatus. Its primary physiological function is unclear. May play a role in neuronal development and synaptic plasticity. May be required for neuronal myelin sheath maintenance. May promote myelin homeostasis through acting as an agonist for ADGRG6 receptor. May play a role in iron uptake and iron homeostasis. Soluble oligomers are toxic to cultured neuroblastoma cells and induce apoptosis (in vitro). Association with GPC1 (via its heparan sulfate chains) targets PRNP to lipid rafts. Also provides Cu(2+) or Zn(2+) for the ascorbate-mediated GPC1 deaminase degradation of its heparan sulfate side chains. The sequence is that of Major prion protein (PRNP) from Pongo pygmaeus (Bornean orangutan).